The primary structure comprises 357 residues: Guanine nucleotide-binding protein alpha-16 subunit (357 aa).

The N-myristoyl glycine moiety is linked to residue glycine 2. A lipid anchor (S-palmitoyl cysteine) is attached at cysteine 3. A G-alpha domain is found at arginine 32 to tyrosine 357. The tract at residues lysine 35–threonine 48 is G1 motif. GTP contacts are provided by residues glycine 40–serine 47, leucine 175–threonine 181, aspartate 200–glutamine 204, asparagine 269–aspartate 272, and alanine 329. 2 residues coordinate Mg(2+): serine 47 and threonine 181. The tract at residues aspartate 173 to threonine 181 is G2 motif. The segment at phenylalanine 196–arginine 205 is G3 motif. A G4 motif region spans residues isoleucine 265–aspartate 272. The G5 motif stretch occupies residues threonine 327–threonine 332.

The protein belongs to the G-alpha family. As to quaternary structure, g proteins are composed of 3 units; alpha, beta and gamma. The alpha chain contains the guanine nucleotide binding site.

Guanine nucleotide-binding proteins (G proteins) are involved as modulators or transducers in various transmembrane signaling systems. In the 1-cell embryo, probably together with goa-1, controls nuclear rotation and spindle elongation during mitosis. During the first embryonic cell divisons, plays a role in gpr-1/2 cortical localization and in the proper orientation of EMS blastomere mitotic spindle. The chain is Guanine nucleotide-binding protein alpha-16 subunit (gpa-16) from Caenorhabditis elegans.